The following is a 216-amino-acid chain: Adenylate kinase (216 aa).

10–15 provides a ligand contact to ATP; sequence GAGKGT. Residues 30–59 form an NMP region; it reads STGDMLRAAVKAGTKLGQQVQGIMAAGKLV. AMP is bound by residues Thr-31, Arg-36, 57-59, 85-88, and Gln-92; these read KLV and GFPR. The LID stretch occupies residues 122 to 159; sequence GRRVHMPSGRIYHLKFNPPKITDKDDMTGESLTLRKDD. ATP contacts are provided by residues Arg-123 and 132 to 133; that span reads IY. Residues Arg-156 and Arg-167 each contribute to the AMP site. Residue Arg-200 participates in ATP binding.

This sequence belongs to the adenylate kinase family. In terms of assembly, monomer.

Its subcellular location is the cytoplasm. It carries out the reaction AMP + ATP = 2 ADP. The protein operates within purine metabolism; AMP biosynthesis via salvage pathway; AMP from ADP: step 1/1. Functionally, catalyzes the reversible transfer of the terminal phosphate group between ATP and AMP. Plays an important role in cellular energy homeostasis and in adenine nucleotide metabolism. This is Adenylate kinase from Hamiltonella defensa subsp. Acyrthosiphon pisum (strain 5AT).